The following is a 1075-amino-acid chain: DNA-directed RNA polymerase subunit beta (1075 aa).

It belongs to the RNA polymerase beta chain family. As to quaternary structure, in plastids the minimal PEP RNA polymerase catalytic core is composed of four subunits: alpha, beta, beta', and beta''. When a (nuclear-encoded) sigma factor is associated with the core the holoenzyme is formed, which can initiate transcription.

It localises to the plastid. It is found in the chloroplast. The catalysed reaction is RNA(n) + a ribonucleoside 5'-triphosphate = RNA(n+1) + diphosphate. DNA-dependent RNA polymerase catalyzes the transcription of DNA into RNA using the four ribonucleoside triphosphates as substrates. The protein is DNA-directed RNA polymerase subunit beta of Oryza sativa (Rice).